We begin with the raw amino-acid sequence, 218 residues long: Protein N-lysine methyltransferase METTL21A (218 aa).

Residues Trp47, 73-75 (GAG), Asp94, Trp125, and Ala143 contribute to the S-adenosyl-L-methionine site.

It belongs to the methyltransferase superfamily. METTL21 family.

Its subcellular location is the cytoplasm. The enzyme catalyses L-lysyl-[protein] + 3 S-adenosyl-L-methionine = N(6),N(6),N(6)-trimethyl-L-lysyl-[protein] + 3 S-adenosyl-L-homocysteine + 3 H(+). Its function is as follows. Protein-lysine methyltransferase that selectively trimethylates residues in heat shock protein 70 (HSP70) family members. This is Protein N-lysine methyltransferase METTL21A (mettl21a) from Danio rerio (Zebrafish).